A 152-amino-acid chain; its full sequence is Probable ribose-5-phosphate isomerase B (152 aa).

Position 10–11 (10–11 (DH)) interacts with D-ribulose 5-phosphate. C69 functions as the Proton acceptor in the catalytic mechanism. 70-74 (GTGVG) contributes to the D-ribulose 5-phosphate binding site. The active-site Proton donor is H102. D103, R113, R136, and R140 together coordinate D-ribulose 5-phosphate.

The protein belongs to the LacAB/RpiB family. In terms of assembly, homodimer.

It catalyses the reaction aldehydo-D-ribose 5-phosphate = D-ribulose 5-phosphate. Its pathway is carbohydrate degradation; pentose phosphate pathway; D-ribose 5-phosphate from D-ribulose 5-phosphate (non-oxidative stage): step 1/1. Catalyzes the interconversion of ribulose-5-P and ribose-5-P. In Mycoplasma genitalium (strain ATCC 33530 / DSM 19775 / NCTC 10195 / G37) (Mycoplasmoides genitalium), this protein is Probable ribose-5-phosphate isomerase B.